A 134-amino-acid polypeptide reads, in one-letter code: MAGGAGGDGDGRQALGREGEALAAAWLAERGFRILDRNHRTRRGEVDLVCRDGEVLVFVEVRSRTSGAQGGPEETVGPLKGRRVVAAATDWALGHGGLEQAIRFDVVAVTFGDGEPRVEHFPAAFDGDGRPGHW.

Belongs to the UPF0102 family.

This chain is UPF0102 protein Adeh_1910, found in Anaeromyxobacter dehalogenans (strain 2CP-C).